The following is a 352-amino-acid chain: Bifunctional protein FolD 1, mitochondrial (352 aa).

A mitochondrion-targeting transit peptide spans 1-23; sequence MLMIARKALASAHTKAFRLATRD.

The protein belongs to the tetrahydrofolate dehydrogenase/cyclohydrolase family. Homodimer.

The protein resides in the mitochondrion. It catalyses the reaction (6R)-5,10-methylene-5,6,7,8-tetrahydrofolate + NADP(+) = (6R)-5,10-methenyltetrahydrofolate + NADPH. The catalysed reaction is (6R)-5,10-methenyltetrahydrofolate + H2O = (6R)-10-formyltetrahydrofolate + H(+). It functions in the pathway one-carbon metabolism; tetrahydrofolate interconversion. Functionally, catalyzes the oxidation of 5,10-methylenetetrahydrofolate to 5,10-methenyltetrahydrofolate and then the hydrolysis of 5,10-methenyltetrahydrofolate to 10-formyltetrahydrofolate. This Arabidopsis thaliana (Mouse-ear cress) protein is Bifunctional protein FolD 1, mitochondrial (FOLD1).